The primary structure comprises 220 residues: Translation initiation factor 6 (220 aa).

The protein belongs to the eIF-6 family.

In terms of biological role, binds to the 50S ribosomal subunit and prevents its association with the 30S ribosomal subunit to form the 70S initiation complex. This chain is Translation initiation factor 6, found in Halobacterium salinarum (strain ATCC 29341 / DSM 671 / R1).